Consider the following 297-residue polypeptide: uncharacterized protein (297 aa).

In terms of domain architecture, HTH araC/xylS-type spans 187-285 (EKLIATLHAS…GYAPSAVLKN (99 aa)). 2 consecutive DNA-binding regions (H-T-H motif) follow at residues 204 to 225 (ADMA…LRYT) and 252 to 275 (VGEV…KHKF).

This is an uncharacterized protein from Escherichia coli (strain K12).